The sequence spans 213 residues: Serine protease inhibitor 5 (213 aa).

Residues 1–22 form the signal peptide; that stretch reads MKCLFLLCLCLVPIVVFSSTFT. Residues 23–28 constitute a propeptide that is removed on maturation; sequence SQNPIN. Positions 25–30 match the Vacuolar targeting signal motif; the sequence is NPINLP. Disulfide bonds link Cys76/Cys125 and Cys174/Cys183.

This sequence belongs to the protease inhibitor I3 (leguminous Kunitz-type inhibitor) family.

It localises to the vacuole. In terms of biological role, inhibitor of trypsin (serine protease). Protects the plant by inhibiting proteases of invading organisms. This chain is Serine protease inhibitor 5, found in Solanum tuberosum (Potato).